We begin with the raw amino-acid sequence, 1305 residues long: Adenylate cyclase type 9 (1305 aa).

Residues 1–110 (MASPVNQQLL…CFPQTQRRFR (110 aa)) are Cytoplasmic-facing. Residues 46–55 (ISSSCSSGES) show a composition bias toward low complexity. The tract at residues 46 to 71 (ISSSCSSGESGVKKTGGSGGARRQKK) is disordered. Residues 111–131 (YALMYLSVAGLLWSIYFSVHM) form a helical membrane-spanning segment. The Extracellular segment spans residues 132-134 (KTK). The helical transmembrane segment at 135–155 (LVSHLVPTLCFLIVCLGFFFF) threads the bilayer. The Cytoplasmic segment spans residues 156–164 (TFTKSYARH). The chain crosses the membrane as a helical span at residues 165-185 (CTAISLLVTLLVFTLTLASQF). Topologically, residues 186–209 (QVLNPGLGSDSLSNLTSFSATGSS) are extracellular. Asparagine 199 is a glycosylation site (N-linked (GlcNAc...) asparagine). A helical transmembrane segment spans residues 210 to 229 (SCLSQVGSFSICVEVLLLLY). The Cytoplasmic segment spans residues 230–235 (TVMHLP). The chain crosses the membrane as a helical span at residues 236–253 (LYLSACLGVAYSILFETF). Residues 254-274 (GYHFRDESCFVLLVGRMAHWE) are Extracellular-facing. Residues 275–295 (LLSKALLHVCIHAIGVHLFIM) traverse the membrane as a helical segment. Residues 296–778 (SEVRSRSTFL…VKTFASATFS (483 aa)) are Cytoplasmic-facing. The interval 343–369 (QGDDESENSVKRHSASSPKSRKKKSSI) is disordered. A compositionally biased stretch (basic residues) spans 353 to 368 (KRHSASSPKSRKKKSS). Aspartate 393, isoleucine 394, and aspartate 437 together coordinate Mg(2+). ATP-binding positions include 393–398 (DIVGFT), 435–437 (LGD), and arginine 481. Polar residues-rich tracts occupy residues 607 to 618 (SDSHTNCTQPET) and 670 to 680 (ESSTGDTLTNS). Residues 607–680 (SDSHTNCTQP…SSTGDTLTNS (74 aa)) form a disordered region. A helical membrane pass occupies residues 779-799 (SLQDVLLNYFIFVLLSVACLL). Topologically, residues 800–810 (KPGTNTVSPPT) are extracellular. A helical transmembrane segment spans residues 811–831 (LALVLLSVCGLLGFLSLLVSV). Residues 832 to 859 (RMAFYLEDMLLCTRRLLEIISGWVPRHF) are Cytoplasmic-facing. Residues 860 to 880 (IGTVLVCLPAAVIFSYLSSDF) form a helical membrane-spanning segment. Residues 881–883 (YTD) are Extracellular-facing. The helical transmembrane segment at 884 to 904 (IHYTMFLCSALLIPMVQYCNF) threads the bilayer. Residues 905 to 911 (CQLSSSA) lie on the Cytoplasmic side of the membrane. A helical transmembrane segment spans residues 912 to 932 (LLLATITGATMLILIYLPLCP). The Extracellular segment spans residues 933–966 (QRPPLDPGTDIEANLSTSNSSYETLDNPRTELPF). N-linked (GlcNAc...) asparagine glycosylation is found at asparagine 946 and asparagine 951. The chain crosses the membrane as a helical span at residues 967 to 987 (TRLGQEIAVAYFLLLLLVWFL). Over 988 to 1305 (NREFDVSYRL…EERGRDGGAR (318 aa)) the chain is Cytoplasmic. ATP-binding positions include lysine 1099, 1176-1178 (DIW), 1183-1187 (NIASR), and lysine 1223. The tract at residues 1261-1305 (SIGRSPTDEISSLVTGGKGAVELGSGEAERKREKAEERGRDGGAR) is disordered. Residues 1287–1305 (EAERKREKAEERGRDGGAR) show a composition bias toward basic and acidic residues.

It belongs to the adenylyl cyclase class-4/guanylyl cyclase family. Mg(2+) serves as cofactor. The cofactor is Mn(2+). As to expression, detected in oocytes.

The protein localises to the cell membrane. The catalysed reaction is ATP = 3',5'-cyclic AMP + diphosphate. Adenylyl cyclase that catalyzes the formation of the signaling molecule cAMP in response to activation of G protein-coupled receptors. The sequence is that of Adenylate cyclase type 9 (adcy9) from Xenopus laevis (African clawed frog).